The primary structure comprises 347 residues: MDPSGEQLHRSEASSSTSSGDPQSAEELSVPEVLCVESGTSETPIPDAQLQDRPLSPQKGAALPEQEELQEYRRSRARSFSLPADPILQAAKLLQQRQQAGQPSSEGGAPAGDCCSKCKKRVQFADSLGLSLASVKHFSEAEEPQVPPAVLSRLHSFPLRAEDLQQLGGLLAVATMPDPLLVPCARLRPHFQLPELRAAEERLRRQRVCLERVQCSQPPRAEVTGSGRVISCPGPRAVAVRYTFTEWRTFLDVPAELDPESVEPLPPLQSGDSGSKAEDSEEGPGTERFHFSLCLPPGLQPKEGEDAGAWGVAIHFAVCYRCEQGEYWDNNEGANYTLRYVCSTDPL.

The disordered stretch occupies residues 1 to 77; it reads MDPSGEQLHR…ELQEYRRSRA (77 aa). The span at 13–22 shows a compositional bias: polar residues; it reads ASSSTSSGDP. The residue at position 81 (Ser81) is a Phosphoserine. The region spanning 200-339 is the CBM21 domain; sequence EERLRRQRVC…NNEGANYTLR (140 aa). A disordered region spans residues 258 to 286; the sequence is DPESVEPLPPLQSGDSGSKAEDSEEGPGT.

Functionally, glycogen-targeting subunit for protein phosphatase 1 (PP1). Involved in the regulation of hepatic glycogenesis in a manner coupled to the fasting-feeding cycle and distinct from other glycogen-targeting subunits. The polypeptide is Protein phosphatase 1 regulatory subunit 3G (Ppp1r3g) (Mus musculus (Mouse)).